The sequence spans 121 residues: Small ribosomal subunit protein uS13 (121 aa).

The tract at residues 91–121 (HRMSLPVRGQRTRTNARTRRGSRKTVAGRKK) is disordered. Basic residues predominate over residues 100–121 (QRTRTNARTRRGSRKTVAGRKK).

Belongs to the universal ribosomal protein uS13 family. As to quaternary structure, part of the 30S ribosomal subunit. Forms a loose heterodimer with protein S19. Forms two bridges to the 50S subunit in the 70S ribosome.

In terms of biological role, located at the top of the head of the 30S subunit, it contacts several helices of the 16S rRNA. In the 70S ribosome it contacts the 23S rRNA (bridge B1a) and protein L5 of the 50S subunit (bridge B1b), connecting the 2 subunits; these bridges are implicated in subunit movement. Contacts the tRNAs in the A and P-sites. This is Small ribosomal subunit protein uS13 from Prochlorococcus marinus (strain MIT 9312).